The sequence spans 293 residues: Lymphocyte antigen 6 complex locus protein G6f (293 aa).

The first 19 residues, 1 to 19 (MAMVVFLLLYLCGHPQAAA), serve as a signal peptide directing secretion. In terms of domain architecture, Ig-like V-type spans 20 to 124 (DNIQTLYVPS…HKYQNWRVYD (105 aa)). Over 20-237 (DNIQTLYVPS…APLPSWDVSW (218 aa)) the chain is Extracellular. A disulfide bridge connects residues C37 and C108. N-linked (GlcNAc...) asparagine glycosylation occurs at N90. Residues 238–258 (ILMLLFAAGQGVTIIALSIVI) traverse the membrane as a helical segment. Over 259–293 (WRHQRAQGTQDREPSIPHFKPEVQVYENIHLARLR) the chain is Cytoplasmic. Y284 is modified (phosphotyrosine).

As to quaternary structure, homodimer; disulfide-linked. Interacts with GRB2 and GRB7 in a phosphorylation-dependent manner. N-glycosylated.

Its subcellular location is the cell membrane. Functionally, may play a role in the downstream signal transduction pathways involving GRB2 and GRB7. This chain is Lymphocyte antigen 6 complex locus protein G6f (Ly6g6f), found in Rattus norvegicus (Rat).